Here is a 736-residue protein sequence, read N- to C-terminus: Polyribonucleotide nucleotidyltransferase (736 aa).

Residues D493 and D499 each contribute to the Mg(2+) site. A KH domain is found at 560–619; the sequence is PQHAELVVNPDAIRMIIGPGGKNIKQITTVTGAAIDINDSGKISIFAPTSEAMEQAKQMI. In terms of domain architecture, S1 motif spans 629 to 703; that stretch reads GKNYKGKVRK…SRKAVLLEEE (75 aa). Residues 710-736 form a disordered region; it reads EESSRFSKGNRNGDRSRHNNRERTRRT. Positions 720-736 are enriched in basic and acidic residues; sequence RNGDRSRHNNRERTRRT.

This sequence belongs to the polyribonucleotide nucleotidyltransferase family. The cofactor is Mg(2+).

It localises to the cytoplasm. The catalysed reaction is RNA(n+1) + phosphate = RNA(n) + a ribonucleoside 5'-diphosphate. Functionally, involved in mRNA degradation. Catalyzes the phosphorolysis of single-stranded polyribonucleotides processively in the 3'- to 5'-direction. The sequence is that of Polyribonucleotide nucleotidyltransferase from Lawsonia intracellularis (strain PHE/MN1-00).